Reading from the N-terminus, the 110-residue chain is UPF0122 protein SPG_1182 (110 aa).

The protein belongs to the UPF0122 family.

In terms of biological role, might take part in the signal recognition particle (SRP) pathway. This is inferred from the conservation of its genetic proximity to ftsY/ffh. May be a regulatory protein. The sequence is that of UPF0122 protein SPG_1182 from Streptococcus pneumoniae serotype 19F (strain G54).